The chain runs to 390 residues: tRNA-specific 2-thiouridylase MnmA (390 aa).

Residues 36 to 43 (GMSGGVDS) and Met-62 each bind ATP. The interval 122 to 124 (NPD) is interaction with target base in tRNA. Cys-127 functions as the Nucleophile in the catalytic mechanism. An intrachain disulfide couples Cys-127 to Cys-223. Residue Gly-151 participates in ATP binding. The segment at 173-175 (KDQ) is interaction with tRNA. Cys-223 acts as the Cysteine persulfide intermediate in catalysis. Residues 335 to 336 (RY) form an interaction with tRNA region.

It belongs to the MnmA/TRMU family.

It is found in the cytoplasm. The catalysed reaction is S-sulfanyl-L-cysteinyl-[protein] + uridine(34) in tRNA + AH2 + ATP = 2-thiouridine(34) in tRNA + L-cysteinyl-[protein] + A + AMP + diphosphate + H(+). Its function is as follows. Catalyzes the 2-thiolation of uridine at the wobble position (U34) of tRNA, leading to the formation of s(2)U34. The sequence is that of tRNA-specific 2-thiouridylase MnmA from Marinomonas sp. (strain MWYL1).